The primary structure comprises 521 residues: BAR/IMD domain-containing adapter protein 2 (521 aa).

The IMD domain maps to 1–250 (MSLSRSEEMH…VQLMQQMGNS (250 aa)). A coiled-coil region spans residues 132–153 (DALDKCQAELKKLRKKSQGSKN). A phosphoserine mark is found at Ser-262, Ser-324, Ser-326, and Ser-337. The segment at 297 to 370 (APVMNGVSGP…TLPRSSSMAA (74 aa)) is disordered. Over residues 321 to 333 (QPKSTSPPQSQSK) the composition is skewed to low complexity. Position 341 is a phosphothreonine (Thr-341). A Phosphoserine modification is found at Ser-347. Residues 353 to 368 (SYATTENKTLPRSSSM) are compositionally biased toward polar residues. The residue at position 361 (Thr-361) is a Phosphothreonine. Ser-367, Ser-385, Ser-396, and Ser-455 each carry phosphoserine. The region spanning 375–438 (NGRMRVKAIF…PFSYTRVLDN (64 aa)) is the SH3 domain. The disordered stretch occupies residues 450–471 (QGKSSSTGNLLDKEDLALPPPD).

As to quaternary structure, homodimer. Interacts with CDC42 and RAC1 that have been activated by GTP binding. Interacts with ATN1, ADGRB1, DIAPH1, EPS8, SHANK1, SHANK2, SHANK3, TIAM1, WASF1 and WASF2. Interacts with ENAH after recruitment of CDC42. In terms of processing, phosphorylated on tyrosine residues by INSR in response to insulin treatment.

The protein localises to the cytoplasm. Its subcellular location is the membrane. The protein resides in the cell projection. It localises to the filopodium. It is found in the ruffle. The protein localises to the cytoskeleton. In terms of biological role, adapter protein that links membrane-bound small G-proteins to cytoplasmic effector proteins. Necessary for CDC42-mediated reorganization of the actin cytoskeleton and for RAC1-mediated membrane ruffling. Involved in the regulation of the actin cytoskeleton by WASF family members and the Arp2/3 complex. Plays a role in neurite growth. Acts syngeristically with ENAH to promote filipodia formation. Plays a role in the reorganization of the actin cytoskeleton in response to bacterial infection. Participates in actin bundling when associated with EPS8, promoting filopodial protrusions. The chain is BAR/IMD domain-containing adapter protein 2 (BAIAP2) from Bos taurus (Bovine).